Consider the following 377-residue polypeptide: MSDSSHNLLYNKFELPESVKMSPVEGAVGGIDKVARFVADPLEKGMGHTLGSALRRALLIGLEAPAIVSFSMTGVLHEYMAVEGIIEDVTNIVLNLKGSLLKKYPLQDCEGGRCSQKLRATISVDASDLAAAGGQKEVTLGDLLQEGTFEAVNPEHVIFTVTRPMQLEVMLRVAFGRGYSPSERIVLEERGMNEIVLDAAFSPVVLVNYFVEDTRVGQDTDFDRLVLQVETDGRVAPKEAVAFATQILSKHFSVFEKMDEKRIVFEEAISVEKENKDDILHKLVLGINEIELSVRSTNCLSNANIETIGELVIMPEPRLLQFRNFGKKSLCEIKNKLKEMKLELGMDLSQFGVGLDNVKEKMKWYAEKIRSSKNTKG.

Residues 1-259 form an alpha N-terminal domain (alpha-NTD) region; it reads MSDSSHNLLY…KHFSVFEKMD (259 aa). An alpha C-terminal domain (alpha-CTD) region spans residues 279 to 377; sequence ILHKLVLGIN…KIRSSKNTKG (99 aa).

Belongs to the RNA polymerase alpha chain family. As to quaternary structure, homodimer. The RNAP catalytic core consists of 2 alpha, 1 beta, 1 beta' and 1 omega subunit. When a sigma factor is associated with the core the holoenzyme is formed, which can initiate transcription.

The enzyme catalyses RNA(n) + a ribonucleoside 5'-triphosphate = RNA(n+1) + diphosphate. DNA-dependent RNA polymerase catalyzes the transcription of DNA into RNA using the four ribonucleoside triphosphates as substrates. This Chlamydia trachomatis serovar L2 (strain ATCC VR-902B / DSM 19102 / 434/Bu) protein is DNA-directed RNA polymerase subunit alpha.